A 320-amino-acid chain; its full sequence is Methenyltetrahydromethanopterin cyclohydrolase (320 aa).

Belongs to the MCH family.

It localises to the cytoplasm. It carries out the reaction 5,10-methenyl-5,6,7,8-tetrahydromethanopterin + H2O = N(5)-formyl-5,6,7,8-tetrahydromethanopterin + H(+). Catalyzes the hydrolysis of methenyl-H(4)MPT(+) to 5-formyl-H(4)MPT. This is Methenyltetrahydromethanopterin cyclohydrolase from Methanococcoides burtonii (strain DSM 6242 / NBRC 107633 / OCM 468 / ACE-M).